Here is a 140-residue protein sequence, read N- to C-terminus: uncharacterized protein (140 aa).

This is an uncharacterized protein from Bacillus subtilis (strain 168).